We begin with the raw amino-acid sequence, 427 residues long: Glutamate-1-semialdehyde 2,1-aminomutase (427 aa).

Residue lysine 265 is modified to N6-(pyridoxal phosphate)lysine.

The protein belongs to the class-III pyridoxal-phosphate-dependent aminotransferase family. HemL subfamily. Homodimer. Pyridoxal 5'-phosphate is required as a cofactor.

It is found in the cytoplasm. It carries out the reaction (S)-4-amino-5-oxopentanoate = 5-aminolevulinate. It participates in porphyrin-containing compound metabolism; protoporphyrin-IX biosynthesis; 5-aminolevulinate from L-glutamyl-tRNA(Glu): step 2/2. The chain is Glutamate-1-semialdehyde 2,1-aminomutase from Burkholderia multivorans (strain ATCC 17616 / 249).